The following is a 545-amino-acid chain: uncharacterized protein (545 aa).

Composition is skewed to basic and acidic residues over residues 34–44 and 53–63; these read PMNKQNEKLKT and PRNDYSRRVSR. Disordered regions lie at residues 34-98, 269-296, and 415-444; these read PMNK…PESN, QNGT…PQDS, and ERPQ…SAPE. Polar residues predominate over residues 69–78; sequence TDSSEQQITA. Residues 415-428 are compositionally biased toward basic and acidic residues; it reads ERPQRKTEHVKTPE. Positions 429–441 are enriched in polar residues; it reads ENLQTKNPTTMTS.

This is an uncharacterized protein from Mus musculus (Mouse).